Reading from the N-terminus, the 238-residue chain is Small ribosomal subunit protein eS4 (238 aa).

In terms of domain architecture, S4 RNA-binding spans Leu-38–Ile-110.

Belongs to the eukaryotic ribosomal protein eS4 family.

The polypeptide is Small ribosomal subunit protein eS4 (Pyrobaculum islandicum (strain DSM 4184 / JCM 9189 / GEO3)).